The following is a 219-amino-acid chain: GPI ethanolamine phosphate transferase, stabilizing subunit (219 aa).

6 helical membrane-spanning segments follow: residues 11 to 31 (YTHL…SLFL), 42 to 62 (TWLC…YLVV), 86 to 106 (YFLM…APLI), 113 to 133 (FLFA…LLGP), 155 to 175 (LQIT…PIPL), and 189 to 209 (TLGA…WIYW).

Belongs to the PIGF family. In terms of assembly, part of the ethanolamine phosphate transferase 3 complex composed by PIGO and PIGF. Part of the ethanolamine phosphate transferase 2 complex with PIGG. PIGF is required to stabilize PIGG and PIGO.

It localises to the endoplasmic reticulum membrane. It functions in the pathway glycolipid biosynthesis; glycosylphosphatidylinositol-anchor biosynthesis. In terms of biological role, stabilizing subunit of the ethanolamine phosphate transferase 3 and ethanolamine phosphate transferase 2 complexes that sequentially transfer an ethanolamine phosphate (EtNP) from a phosphatidylethanolamine (PE) to the 6-OH position of the third alpha-1,2-linked mannose and the second alpha-1,6-linked mannose of the alpha-D-Man-(1-&gt;2)-alpha-D-Man-(1-&gt;6)-2-PEtn-alpha-D-Man-(1-&gt;4)-alpha-D-GlcN-(1-&gt;6)-(1-radyl,2-acyl-sn-glycero-3-phospho)-2-acyl-inositol (also termed H6) intermediate to generate a 6-PEtn-alpha-D-Man-(1-&gt;2)-6-PEtn-alpha-D-Man-(1-&gt;6)-2-PEtn-alpha-D-Man-(1-&gt;4)-alpha-D-GlcN-(1-&gt;6)-(1-radyl,2-acyl-sn-glycero-3-phospho)-2-acyl-inositol (also termed H8). Participates in the tenth and eleventh steps of the glycosylphosphatidylinositol-anchor biosynthesis, in association with PIGO and PIGG, respectively. The polypeptide is GPI ethanolamine phosphate transferase, stabilizing subunit (Homo sapiens (Human)).